The following is a 60-amino-acid chain: Large ribosomal subunit protein uL30 (60 aa).

This sequence belongs to the universal ribosomal protein uL30 family. In terms of assembly, part of the 50S ribosomal subunit.

This Streptococcus pneumoniae (strain Hungary19A-6) protein is Large ribosomal subunit protein uL30.